We begin with the raw amino-acid sequence, 388 residues long: uncharacterized protein (388 aa).

It localises to the mitochondrion. This is an uncharacterized protein from Dictyostelium citrinum (Slime mold).